The sequence spans 1027 residues: A-factor-processing enzyme (1027 aa).

H118 serves as a coordination point for Zn(2+). The active-site Proton acceptor is the E121. Residues H122 and E199 each contribute to the Zn(2+) site.

This sequence belongs to the peptidase M16 family. The cofactor is Zn(2+).

The protein localises to the membrane. Inhibited by chelating agents like EDTA, TPEN and 1,1-phenanthroline, as well as NEM, free cysteine and DTT. In terms of biological role, involved in the N-terminal endoproteolytic cleavage of the P2 precursor of the a-factor mating pheromone. Capable of proteolysing the established mammalian insulin-degrading enzymes (IDEs) substrates amyloid-beta peptide and insulin B-chain. In Saccharomyces cerevisiae (strain ATCC 204508 / S288c) (Baker's yeast), this protein is A-factor-processing enzyme (STE23).